Reading from the N-terminus, the 118-residue chain is Ferredoxin-thioredoxin reductase, catalytic chain (118 aa).

C57 lines the [4Fe-4S] cluster pocket. Residue C59 is the Nucleophile of the active site. C59 and C89 are disulfide-bonded. C76, C78, and C87 together coordinate [4Fe-4S] cluster.

It belongs to the ferredoxin thioredoxin reductase beta subunit family. As to quaternary structure, heterodimer of subunit A (variable subunit) and subunit B (catalytic subunit). Heterodimeric FTR forms a complex with ferredoxin and thioredoxin. The cofactor is [4Fe-4S] cluster.

The protein resides in the plastid. It is found in the chloroplast. The catalysed reaction is [thioredoxin]-disulfide + 2 reduced [2Fe-2S]-[ferredoxin] + 2 H(+) = [thioredoxin]-dithiol + 2 oxidized [2Fe-2S]-[ferredoxin]. Catalytic subunit of the ferredoxin-thioredoxin reductase (FTR), which catalyzes the two-electron reduction of thioredoxins by the electrons provided by reduced ferredoxin. The protein is Ferredoxin-thioredoxin reductase, catalytic chain (ftrB) of Porphyra purpurea (Red seaweed).